The primary structure comprises 1038 residues: MFEEVLQESFDEREKKVLKFWQEGQLFERSVENRKGQPLFTFYDGPPFATGLPHYGHILAGTIKDVVLRYKTMKGFCAPRRFGWDCHGLPVENEIEKTFGLSGAKSIEEFGIAKFNEECRNIVLRYTEEWKFTVNRMGRWVDFNQTYRTMDLPFMESVWWVFKQLYAKGLVYEGLKVMPFSAKLGTPLSNFEASENYKEVDDPSLTVAFQSRDNSNTYFLAWTTTPWTLVSNLALMVSPMIEYAEVQDHVSKRNYILATERLKGYYKDSGEYTIVRKFPGSELEGQHYIPLFDYFNDRAHSGAFKIILEDSISVEEGTGIVQTAPAFGEIDFYACQKAGIDPVCPVDNNGQFTDEIPEYKGIFVKEADKDIIKRLKQQAKVIHQGTCHHRYPFCPRSDTPLIYKTVRTWFVAVEKIKDRLLAANSQIHWTPEHIQYGRFGKWLEGARDWAISRNRYWGTPIPLWRAQDGEIHVVGSIEELKQLTGNPLTDLHRHFIDEMSFEKNGKTFKRIPEVFDCWFESGSMPYAQNHYPFENRELFEQNFPADFIAEGLDQTRGWFYTLTVLSAALFDQPAMKNVIVNGLILAENGAKMSKRLKNYPDPAEVIQQYGADAIRLYMLHSPAVKADDLSFSKSGVELVLRQILLPLWNAYTFFLTYARIYNWKPGKLVQKPELAIDQWIISLLNKLVHEVEQGMDDYDLSRSVEPFVNFVDQLTNWYIRRSRRRFWDDKESPNRTQAFETLYYVLIELTKISAPYVPFISEAIYQNLRSCDMPESVHLCDFPHYQQLSRHEKLEAEMEAVQVTVSLGHALRKEHKLKVRQPLATAQLASADPKVLDFLKEQQHLISEELNVKEITFSSNEKDFVSLKAKPNFRVLGKKVGKLMKLAQLTIEQFGQKELTELLNHRSVEIILEGHPVLLTSEDVQVERIVREGIIAANQGTITIALNTNLNKELLLEGLAREIVNKVNTMRREANFAVTDRIQLYMQTTTRVIECFDQYKNYICQEVLATDVQFGPYEGTDWDLNGEPTKIIIKKSEY.

The 'HIGH' region signature appears at Pro47–His57. The 'KMSKS' region signature appears at Lys591–Arg595. An ATP-binding site is contributed by Lys594.

It belongs to the class-I aminoacyl-tRNA synthetase family. IleS type 2 subfamily. As to quaternary structure, monomer. It depends on Zn(2+) as a cofactor.

It is found in the cytoplasm. It carries out the reaction tRNA(Ile) + L-isoleucine + ATP = L-isoleucyl-tRNA(Ile) + AMP + diphosphate. Functionally, catalyzes the attachment of isoleucine to tRNA(Ile). As IleRS can inadvertently accommodate and process structurally similar amino acids such as valine, to avoid such errors it has two additional distinct tRNA(Ile)-dependent editing activities. One activity is designated as 'pretransfer' editing and involves the hydrolysis of activated Val-AMP. The other activity is designated 'posttransfer' editing and involves deacylation of mischarged Val-tRNA(Ile). This is Isoleucine--tRNA ligase from Protochlamydia amoebophila (strain UWE25).